The sequence spans 354 residues: Putative F-box/kelch-repeat protein At5g03000 (354 aa).

In terms of domain architecture, F-box spans 37 to 86 (PTVFSSLPDELILNCLARVSRFYRPSLSLVNKEFQSLIASPDLEATRSRI). Kelch repeat units lie at residues 143–189 (EIYI…VIDG) and 190–236 (KIYV…FPGK).

This Arabidopsis thaliana (Mouse-ear cress) protein is Putative F-box/kelch-repeat protein At5g03000.